The sequence spans 780 residues: Cullin-5 (780 aa).

Ser34 is subject to Phosphoserine. Thr210 bears the Phosphothreonine mark. Residues Leu713–Asp772 form the Cullin neddylation domain. Residue Lys724 forms a Glycyl lysine isopeptide (Lys-Gly) (interchain with G-Cter in NEDD8) linkage.

The protein belongs to the cullin family. In terms of assembly, component of multiple cullin-5-RING E3 ubiquitin-protein ligase complexes (ECS complexes, also named CRL5 complexes) formed of CUL5, Elongin BC (ELOB and ELOC), RNF7/RBX2 and a variable SOCS box domain-containing protein as substrate-specific recognition component. CUL5-containing ECS complexes specifically contain RNF7/RBX2, and not RBX1, as catalytic subunit. Component of the ECS(ASB2) complex with the substrate recognition component ASB2. Component of the ECS(ASB6) complex with the substrate recognition component ASB6. Component of the ECS(ASB7) complex with the substrate recognition component ASB7. Component of the ECS(ASB9) complex with the substrate recognition component ASB9. Component of the ECS(ASB11) complex with the substrate recognition component ASB11. Component of the ECS(ASB12) complex with the substrate recognition component ASB12. Component of the ECS(LRRC41) complex with the substrate recognition component LRRC41. Component of the ECS(SOCS1) complex with the substrate recognition component SOCS1. Component of the ECS(SOCS2) complex with the substrate recognition component SOCS2. Component of the ECS(WSB1) complex with the substrate recognition subunit WSB1. Component of the ECS(SOCS3) complex with the substrate recognition component SOCS3. Component of the ECS(SOCS7) complex with the substrate recognition component SOCS7. Component of the ECS(SPSB1) complex with the substrate recognition component SPSB1. Component of the ECS(SPSB3) complex with the substrate recognition component SPSB3. Component of the ECS(SPSB2) complex with the substrate recognition component SPSB2. Component of the ECS(SPSB4) complex with the substrate recognition component SPSB4. Component of the ECS(RAB40) complex with the substrate recognition subunit RAB40A, RAB40B or RAB40C. Component of the ECS(KLHDC1) complex with the substrate recognition component KLHDC1. Component of the ECS(PCMTD1) complex with the substrate recognition subunit PCMTD1. May also form complexes containing RBX1 and ELOA or VHL; additional evidence is however required to confirm this result in vivo. Interacts (when neddylated) with ARIH2; leading to activate the E3 ligase activity of ARIH2. Interacts with ERCC6; the interaction is induced by DNA damaging agents or inhibitors of RNA polymerase II elongation. Interacts with ELOA (via the BC-box). Interacts (unneddylated form) with DCUN1D1, DCUN1D2, DCUN1D3, DCUN1D4 and DCUN1D5; these interactions promote the cullin neddylation. In terms of processing, neddylated; which enhances the ubiquitination activity of ECS complexes and prevents binding of the inhibitor CAND1. Deneddylated via its interaction with the COP9 signalosome (CSN). Kidney collecting tubules.

The protein localises to the nucleus. Its pathway is protein modification; protein ubiquitination. Core component of multiple cullin-5-RING E3 ubiquitin-protein ligase complexes (ECS complexes, also named CRL5 complexes), which mediate the ubiquitination and subsequent proteasomal degradation of target proteins. Acts a scaffold protein that contributes to catalysis through positioning of the substrate and the ubiquitin-conjugating enzyme. The functional specificity of the E3 ubiquitin-protein ligase complex depends on the variable SOCS box-containing substrate recognition component. Acts as a key regulator of neuron positioning during cortex development: component of various SOCS-containing ECS complexes, such as the ECS(SOCS7) complex, that regulate reelin signaling by mediating ubiquitination and degradation of DAB1. ECS(SOCS1) seems to direct ubiquitination of JAK2. The ECS(SOCS2) complex mediates the ubiquitination and subsequent proteasomal degradation of phosphorylated EPOR and GHR. The ECS(SPSB3) complex catalyzes ubiquitination of nuclear CGAS. ECS(KLHDC1) complex is part of the DesCEND (destruction via C-end degrons) pathway and mediates ubiquitination and degradation of truncated SELENOS selenoprotein produced by failed UGA/Sec decoding, which ends with a glycine. The ECS(ASB9) complex mediates ubiquitination and degradation of CKB. As part of some ECS complex, promotes 'Lys-11'-linked ubiquitination and degradation of BTRC. As part of a multisubunit ECS complex, polyubiquitinates monoubiquitinated POLR2A. As part of the ECS(RAB40C) complex, mediates ANKRD28 ubiquitination and degradation, thereby regulating protein phosphatase 6 (PP6) complex activity and focal adhesion assembly during cell migration. As part of the ECS(RAB40A) complex, mediates RHOU 'Lys-48'-linked ubiquitination and degradation, thus inhibiting focal adhesion disassembly during cell migration. As part of the ECS(RAB40B) complex, mediates LIMA1/EPLIN and RAP2 ubiquitination, thereby regulating actin cytoskeleton dynamics and stress fiber formation during cell migration. May form a cell surface vasopressin receptor. The protein is Cullin-5 (CUL5) of Oryctolagus cuniculus (Rabbit).